A 584-amino-acid polypeptide reads, in one-letter code: MAGGVDGPIGIPFPDHSSDILSGLNEQRTQGLLCDVVILVEGREFPTHRSVLAACSQYFKKLFTSGAVVDQQNVYEIDFVSAEALTALMDFAYTATLTVSTANVGDILSAARLLEIPAVSHVCADLLDRQILAADAGADAGQLDLVDQIDQRNLLRAKEYLEFFQSNPMNSLPPAAAAAAASFPWSAFGASDDDLDATKEAVAAAVAAVAAGDCNGLDFYGPGPPAERPPTGDGDEGDSNPGLWPERDEDAPTGGLFPPPVAPPAATQNGHYGRGGEEEAASLSEAAPEPGDSPGFLSGAAEGEDGDGPDVDGLAASTLLQQMMSSVGRAGAAAGDSDEESRADDKGVMDYYLKYFSGAHDGDVYPAWSQKVEKKIRAKAFQKCPICEKVIQGAGKLPRHIRTHTGEKPYECNICKVRFTRQDKLKVHMRKHTGEKPYLCQQCGAAFAHNYDLKNHMRVHTGLRPYQCDSCCKTFVRSDHLHRHLKKDGCNGVPSRRGRKPRVRGGAPDPSPGATATPGAPAQPSSPDARRNGQEKHFKDEDEDEDVASPDGLGRLNVAGAGGGGDSGGGPGAATDGNFTAGLA.

The 68-residue stretch at 34–101 (CDVVILVEGR…AYTATLTVST (68 aa)) folds into the BTB domain. The segment at 220–313 (YGPGPPAERP…EDGDGPDVDG (94 aa)) is disordered. The segment at 277-584 (EEEAASLSEA…TDGNFTAGLA (308 aa)) is mediates interaction with KHDRBS1. The segment covering 281–290 (ASLSEAAPEP) has biased composition (low complexity). 2 positions are modified to phosphoserine: Ser-337 and Ser-341. A mediates interaction with RELA region spans residues 349–584 (MDYYLKYFSG…TDGNFTAGLA (236 aa)). The mediates interaction with SMAD4 stretch occupies residues 377–584 (RAKAFQKCPI…TDGNFTAGLA (208 aa)). 2 consecutive C2H2-type zinc fingers follow at residues 382–404 (QKCPICEKVIQGAGKLPRHIRTH) and 410–432 (YECNICKVRFTRQDKLKVHMRKH). Residue Lys-436 forms a Glycyl lysine isopeptide (Lys-Gly) (interchain with G-Cter in SUMO2) linkage. A C2H2-type 3 zinc finger spans residues 438 to 460 (YLCQQCGAAFAHNYDLKNHMRVH). Residues 466 to 490 (YQCDSCCKTFVRSDHLHRHLKKDGC) form a C2H2-type 4; atypical zinc finger. The tract at residues 486–584 (KKDGCNGVPS…TDGNFTAGLA (99 aa)) is disordered. The segment covering 505–527 (GGAPDPSPGATATPGAPAQPSSP) has biased composition (low complexity). 3 positions are modified to phosphoserine: Ser-511, Ser-525, and Ser-526. Positions 528–540 (DARRNGQEKHFKD) are enriched in basic and acidic residues. A Glycyl lysine isopeptide (Lys-Gly) (interchain with G-Cter in SUMO2) cross-link involves residue Lys-539. Ser-549 is subject to Phosphoserine. Residues 560 to 572 (GAGGGGDSGGGPG) show a composition bias toward gly residues.

In terms of assembly, homodimer. Interacts with BCL6. Interacts with RELA; involved in the control by RELA of the accessibility of target gene promoters. Interacts with AR (via NR LBD domain); the interaction is direct and androgen-dependent. Interacts with NCOR1. Interacts with NCOR2. Interacts with SMAD4; the interaction is direct and stimulated by TGFB1. Interacts with HDAC1. Interacts with SP1; ZBTB7A prevents the binding to GC-rich motifs in promoters and represses the transcriptional activity of SP1. Interacts with the DNA-dependent protein kinase complex/DNA-PKc. Interacts with KHDRBS1; negatively regulates KHDRBS1 splicing activity. In terms of processing, sumoylated. Undergoes sumoylation with SUMO1 that may regulate its transcriptional activity. As to expression, widely expressed. In normal thymus, expressed in medullary epithelial cells and Hassle's corpuscles (at protein level). In tonsil, expressed in squamous epithelium and germinal center lymphocytes (at protein level). Up-regulated in a subset of lymphomas, as well as in a subset of breast, lung, colon, prostate and bladder carcinomas (at protein level). Expressed in adipose tissues.

The protein resides in the nucleus. In terms of biological role, transcription factor that represses the transcription of a wide range of genes involved in cell proliferation and differentiation. Directly and specifically binds to the consensus sequence 5'-[GA][CA]GACCCCCCCCC-3' and represses transcription both by regulating the organization of chromatin and through the direct recruitment of transcription factors to gene regulatory regions. Negatively regulates SMAD4 transcriptional activity in the TGF-beta signaling pathway through these two mechanisms. That is, recruits the chromatin regulator HDAC1 to the SMAD4-DNA complex and in parallel prevents the recruitment of the transcriptional activators CREBBP and EP300. Collaborates with transcription factors like RELA to modify the accessibility of gene transcription regulatory regions to secondary transcription factors. Also directly interacts with transcription factors like SP1 to prevent their binding to DNA. Functions as an androgen receptor/AR transcriptional corepressor by recruiting NCOR1 and NCOR2 to the androgen response elements/ARE on target genes. Thereby, negatively regulates androgen receptor signaling and androgen-induced cell proliferation. Involved in the switch between fetal and adult globin expression during erythroid cells maturation. Through its interaction with the NuRD complex regulates chromatin at the fetal globin genes to repress their transcription. Specifically represses the transcription of the tumor suppressor ARF isoform from the CDKN2A gene. Efficiently abrogates E2F1-dependent CDKN2A transactivation. Regulates chondrogenesis through the transcriptional repression of specific genes via a mechanism that also requires histone deacetylation. Regulates cell proliferation through the transcriptional regulation of genes involved in glycolysis. Involved in adipogenesis through the regulation of genes involved in adipocyte differentiation. Plays a key role in the differentiation of lymphoid progenitors into B and T lineages. Promotes differentiation towards the B lineage by inhibiting the T-cell instructive Notch signaling pathway through the specific transcriptional repression of Notch downstream target genes. Also regulates osteoclast differentiation. May also play a role, independently of its transcriptional activity, in double-strand break repair via classical non-homologous end joining/cNHEJ. Recruited to double-strand break sites on damage DNA, interacts with the DNA-dependent protein kinase complex and directly regulates its stability and activity in DNA repair. May also modulate the splicing activity of KHDRBS1 toward BCL2L1 in a mechanism which is histone deacetylase-dependent and thereby negatively regulates the pro-apoptotic effect of KHDRBS1. The protein is Zinc finger and BTB domain-containing protein 7A of Homo sapiens (Human).